A 181-amino-acid polypeptide reads, in one-letter code: Trafficking protein particle complex subunit 3 homolog (181 aa).

C70 is lipidated: S-palmitoyl cysteine.

This sequence belongs to the TRAPP small subunits family. BET3 subfamily. As to quaternary structure, homodimer. Part of the multisubunit TRAPP (transport protein particle) complex.

Its subcellular location is the golgi apparatus. The protein localises to the cis-Golgi network. It is found in the endoplasmic reticulum. May play a role in vesicular transport from endoplasmic reticulum to Golgi. Required for the systemic spread of the RNAi response. The chain is Trafficking protein particle complex subunit 3 homolog from Caenorhabditis briggsae.